A 423-amino-acid chain; its full sequence is Amino acid transporter AVT1J (423 aa).

The next 11 helical transmembrane spans lie at 39–59 (CFHG…YALA), 63–83 (WLSL…AILI), 110–130 (VIVS…FLIL), 151–171 (FQGK…SVWL), 186–206 (FASG…GVGF), 219–239 (VATS…FPTL), 252–272 (VMII…VLGY), 297–317 (AIWT…TPII), 333–355 (ASGF…LLPF), 359–381 (LMSL…LCYL), and 390–410 (LGFE…VVIT).

It belongs to the amino acid/polyamine transporter 2 family. Amino acid/auxin permease (AAAP) (TC 2.A.18.5) subfamily.

It localises to the membrane. The polypeptide is Amino acid transporter AVT1J (Arabidopsis thaliana (Mouse-ear cress)).